The sequence spans 207 residues: Small ribosomal subunit protein uS3c (207 aa).

The KH type-2 domain occupies 39-109 (IRDYIFTNLL…QLKINIIDVT (71 aa)).

Belongs to the universal ribosomal protein uS3 family. Part of the 30S ribosomal subunit.

The protein localises to the plastid. Its subcellular location is the chloroplast. The polypeptide is Small ribosomal subunit protein uS3c (rps3) (Cyanidium caldarium (Red alga)).